The primary structure comprises 91 residues: Putative defensin-like protein 221 (91 aa).

Residues 1–19 form the signal peptide; it reads MKTLFFFLTIAVLVSSCTS. 3 disulfide bridges follow: cysteine 61–cysteine 78, cysteine 64–cysteine 83, and cysteine 68–cysteine 85.

This sequence belongs to the DEFL family.

Its subcellular location is the secreted. The protein is Putative defensin-like protein 221 of Arabidopsis thaliana (Mouse-ear cress).